The chain runs to 429 residues: Apolipoprotein A-IV (429 aa).

A signal peptide spans 1–20 (MFLKAVVLTLALVAVTGARA). 13 tandem repeats follow at residues 33 to 54 (DYFS…KSEL), 60 to 81 (ALFQ…KKLV), 82 to 103 (PFAT…EEIR), 115 to 136 (PHAN…QRLE), 137 to 158 (PYTD…RQLT), 159 to 180 (PYAQ…TSLR), 181 to 202 (PHAD…ERLT), 203 to 224 (PYAD…RSLA), 225 to 246 (PYAQ…FQMK), 247 to 268 (KNAE…QRLA), 269 to 286 (PLAE…EGLQ), 287 to 308 (KSLA…LRVE), and 309 to 330 (PYGE…QKLG). The 13 X 22 AA approximate tandem repeats stretch occupies residues 33-330 (DYFSQLSSNA…QMEQLRQKLG (298 aa)). Residues 359 to 429 (KEKESQDNTL…QVQMLAPLES (71 aa)) are disordered. Low complexity predominate over residues 381–420 (QEQQQEQEQEQQQQQEQQQQQEQQREQQQQEQQQEQQQEQ).

This sequence belongs to the apolipoprotein A1/A4/E family. Homodimer. Phosphorylation sites are present in the extracellular medium. Secreted in plasma.

It localises to the secreted. May have a role in chylomicrons and VLDL secretion and catabolism. Required for efficient activation of lipoprotein lipase by ApoC-II; potent activator of LCAT. Apoa-IV is a major component of HDL and chylomicrons. The chain is Apolipoprotein A-IV (APOA4) from Macaca fascicularis (Crab-eating macaque).